The chain runs to 431 residues: Glucose-1-phosphate adenylyltransferase (431 aa).

Lysine 39 is a binding site for beta-D-fructose 1,6-bisphosphate. AMP-binding residues include arginine 40, histidine 46, and arginine 52. Tyrosine 114 contributes to the alpha-D-glucose 1-phosphate binding site. Arginine 130 provides a ligand contact to AMP. Residues glycine 179, 194–195 (EK), and serine 212 each bind alpha-D-glucose 1-phosphate. 2 residues coordinate AMP: glutamate 370 and arginine 386. Beta-D-fructose 1,6-bisphosphate is bound by residues 419-423 (REMLR) and 429-431 (QER).

The protein belongs to the bacterial/plant glucose-1-phosphate adenylyltransferase family. As to quaternary structure, homotetramer.

It carries out the reaction alpha-D-glucose 1-phosphate + ATP + H(+) = ADP-alpha-D-glucose + diphosphate. Its pathway is glycan biosynthesis; glycogen biosynthesis. Its activity is regulated as follows. Allosterically activated by fructose-1,6-bisphosphate (F16BP) and inhibited by AMP. In terms of biological role, involved in the biosynthesis of ADP-glucose, a building block required for the elongation reactions to produce glycogen. Catalyzes the reaction between ATP and alpha-D-glucose 1-phosphate (G1P) to produce pyrophosphate and ADP-Glc. This Escherichia fergusonii (strain ATCC 35469 / DSM 13698 / CCUG 18766 / IAM 14443 / JCM 21226 / LMG 7866 / NBRC 102419 / NCTC 12128 / CDC 0568-73) protein is Glucose-1-phosphate adenylyltransferase.